The primary structure comprises 293 residues: Ethanolamine ammonia-lyase small subunit (293 aa).

The adenosylcob(III)alamin site is built by Val-207 and Glu-228.

It belongs to the EutC family. As to quaternary structure, the basic unit is a heterodimer which dimerizes to form tetramers. The heterotetramers trimerize; 6 large subunits form a core ring with 6 small subunits projecting outwards. It depends on adenosylcob(III)alamin as a cofactor.

It is found in the bacterial microcompartment. The catalysed reaction is ethanolamine = acetaldehyde + NH4(+). The protein operates within amine and polyamine degradation; ethanolamine degradation. Catalyzes the deamination of various vicinal amino-alcohols to oxo compounds. Allows this organism to utilize ethanolamine as the sole source of nitrogen and carbon in the presence of external vitamin B12. This Clostridioides difficile (strain 630) (Peptoclostridium difficile) protein is Ethanolamine ammonia-lyase small subunit.